The chain runs to 308 residues: Dihydroorotate dehydrogenase A (fumarate) (308 aa).

Residues serine 24 and 48–49 (KS) contribute to the FMN site. Residues lysine 48, 72 to 76 (NANGL), and asparagine 132 each bind substrate. Asparagine 132 lines the FMN pocket. Cysteine 135 (nucleophile) is an active-site residue. The FMN site is built by lysine 171 and isoleucine 197. Position 198-199 (198-199 (NT)) interacts with substrate. FMN-binding positions include glycine 223 and 249–250 (GG).

The protein belongs to the dihydroorotate dehydrogenase family. Type 1 subfamily. Homodimer. Requires FMN as cofactor.

Its subcellular location is the cytoplasm. It carries out the reaction (S)-dihydroorotate + fumarate = orotate + succinate. It functions in the pathway pyrimidine metabolism; UMP biosynthesis via de novo pathway. In terms of biological role, catalyzes the conversion of dihydroorotate to orotate with fumarate as the electron acceptor. This Limosilactobacillus reuteri (strain DSM 20016) (Lactobacillus reuteri) protein is Dihydroorotate dehydrogenase A (fumarate) (pyrD).